The following is a 236-amino-acid chain: uncharacterized protein (236 aa).

It localises to the virion. This is an uncharacterized protein from Acanthamoeba polyphaga (Amoeba).